We begin with the raw amino-acid sequence, 180 residues long: ATP synthase subunit delta (180 aa).

It belongs to the ATPase delta chain family. In terms of assembly, F-type ATPases have 2 components, F(1) - the catalytic core - and F(0) - the membrane proton channel. F(1) has five subunits: alpha(3), beta(3), gamma(1), delta(1), epsilon(1). F(0) has three main subunits: a(1), b(2) and c(10-14). The alpha and beta chains form an alternating ring which encloses part of the gamma chain. F(1) is attached to F(0) by a central stalk formed by the gamma and epsilon chains, while a peripheral stalk is formed by the delta and b chains.

It localises to the cell membrane. Its function is as follows. F(1)F(0) ATP synthase produces ATP from ADP in the presence of a proton or sodium gradient. F-type ATPases consist of two structural domains, F(1) containing the extramembraneous catalytic core and F(0) containing the membrane proton channel, linked together by a central stalk and a peripheral stalk. During catalysis, ATP synthesis in the catalytic domain of F(1) is coupled via a rotary mechanism of the central stalk subunits to proton translocation. This protein is part of the stalk that links CF(0) to CF(1). It either transmits conformational changes from CF(0) to CF(1) or is implicated in proton conduction. This chain is ATP synthase subunit delta, found in Bacillus mycoides (strain KBAB4) (Bacillus weihenstephanensis).